Here is a 578-residue protein sequence, read N- to C-terminus: MKYVVVSGGVISGIGKGVLASSTGMLLKTLGLKVTSIKIDPYMNIDAGTMSPLEHGECFVLDDGGETDLDLGNYERYLGITLSRDHNITTGKIYSHVISRERRGDYLGKTVQIVPHLTNAIQDWIQRVSKIPVDDTGLEPDVCIIELGGTVGDIESAPFVEALRQFQFEVGRENFALIHVSLVPVIHGEQKTKPTQAAIKDLRSLGLIPDMIACRCSEELNRSTIDKIAMFCHVGPEQVVNVHDVNSTYHVPLLLLKQHMIDYLHSRLKLGEVPLTLEDKERGSQLLTNWENMTKNLDDSDDVVKIALVGKYTNLKDSYLSVTKSLEHASMKCRRQLEILWVEASNLEPETQEVDKNKFHDSWNKLSSADGILVPGGFGTRGIEGMILAAKWARESGVPFLGVCLGLQVAAIEFARNVIGRPNSSSTEFLDETLLAPEDQVVIYMPEIDKEHMGGTMRLGLRPTIFQPNSEWSNIRKLYGEVNEVHERHRHRYEINPKIVNDMESRGFIFVGKDETGQRCEIFELKGHPYYVGTQYHPEYTSKVLEPSRPFWGLVAAASGTLGDVIKDINLSEGNENE.

In terms of domain architecture, Glutamine amidotransferase type-1 spans 305 to 564 (KIALVGKYTN…VAAASGTLGD (260 aa)). Active-site for GATase activity residues include Cys-404, His-537, and Glu-539.

Belongs to the CTP synthase family. As to quaternary structure, homodimer. Oligomerizes to a tetramer in the presence of its substrates UTP and ATP. It depends on Mg(2+) as a cofactor.

Its subcellular location is the cytoplasm. The catalysed reaction is UTP + L-glutamine + ATP + H2O = CTP + L-glutamate + ADP + phosphate + 2 H(+). It participates in pyrimidine metabolism; CTP biosynthesis via de novo pathway; CTP from UDP: step 2/2. Activated by GTP. Subject to allosteric product inhibition by CTP. Inhibited by p-chloromercuriphenylsulfonic acid, N-ethylmaleimide and cyclopentenylcytosine (CPEC). Catalyzes the ATP-dependent amination of UTP to CTP with either L-glutamine or ammonia as the source of nitrogen. Plays an important role in the regulation of phospholipid synthesis. This chain is CTP synthase 2 (URA8), found in Saccharomyces cerevisiae (strain YJM789) (Baker's yeast).